The primary structure comprises 597 residues: Centrosomal protein of 70 kDa (597 aa).

The disordered stretch occupies residues 1–24 (MFPVAPKPQDSNQPSDRLMTEKQQ). 2 coiled-coil regions span residues 66-179 (MRQN…QTEV) and 254-320 (TYKG…QELI). Residues 483 to 516 (NGVYPRMNEVYTRLGEMNNAVRNLQELLELDSSS) form a TPR repeat.

In terms of assembly, directly interacts with tubulin-gamma; this interaction determines centrosomal localization.

Its subcellular location is the cytoplasm. The protein localises to the cytoskeleton. It localises to the microtubule organizing center. The protein resides in the centrosome. In terms of biological role, plays a role in the organization of both preexisting and nascent microtubules in interphase cells. During mitosis, required for the organization and orientation of the mitotic spindle. The protein is Centrosomal protein of 70 kDa (CEP70) of Macaca fascicularis (Crab-eating macaque).